The sequence spans 305 residues: Ribonuclease BN (305 aa).

7 residues coordinate Zn(2+): His-64, His-66, Asp-68, His-69, His-141, Asp-212, and His-270. Catalysis depends on Asp-68, which acts as the Proton acceptor.

It belongs to the RNase Z family. RNase BN subfamily. As to quaternary structure, homodimer. Requires Zn(2+) as cofactor.

In terms of biological role, zinc phosphodiesterase, which has both exoribonuclease and endoribonuclease activities. This Enterobacter sp. (strain 638) protein is Ribonuclease BN.